We begin with the raw amino-acid sequence, 173 residues long: MLNNPIIQQVLLEILGDDINGFNVLEALTELTEVTDDEISRQLDLKLNTVRKLLYKLYDARLVDYNREKDEETNWYSYTWRATFTKLPGVVKKRMEQLLIDLKEQLEVEENTLFFYCPRCEFKYSFDEAIDYGFRCSQCNGVLKEYNNKNDILMIKNQIKIIEEELALNPLFS.

The HTH TFE/IIEalpha-type domain maps to 3–88; sequence NNPIIQQVLL…TWRATFTKLP (86 aa).

Belongs to the TFE family. In terms of assembly, monomer. Interaction with RNA polymerase subunits RpoF and RpoE is necessary for Tfe stimulatory transcription activity. Able to interact with Tbp and RNA polymerase in the absence of DNA promoter. Interacts both with the preinitiation and elongation complexes.

Transcription factor that plays a role in the activation of archaeal genes transcribed by RNA polymerase. Facilitates transcription initiation by enhancing TATA-box recognition by TATA-box-binding protein (Tbp), and transcription factor B (Tfb) and RNA polymerase recruitment. Not absolutely required for transcription in vitro, but particularly important in cases where Tbp or Tfb function is not optimal. It dynamically alters the nucleic acid-binding properties of RNA polymerases by stabilizing the initiation complex and destabilizing elongation complexes. Seems to translocate with the RNA polymerase following initiation and acts by binding to the non template strand of the transcription bubble in elongation complexes. The polypeptide is Transcription factor E (Methanococcus aeolicus (strain ATCC BAA-1280 / DSM 17508 / OCM 812 / Nankai-3)).